A 308-amino-acid chain; its full sequence is Elongation factor Ts (308 aa).

Positions 80–83 (TDFV) are involved in Mg(2+) ion dislocation from EF-Tu.

Belongs to the EF-Ts family.

The protein resides in the cytoplasm. Associates with the EF-Tu.GDP complex and induces the exchange of GDP to GTP. It remains bound to the aminoacyl-tRNA.EF-Tu.GTP complex up to the GTP hydrolysis stage on the ribosome. This chain is Elongation factor Ts, found in Rhizobium etli (strain ATCC 51251 / DSM 11541 / JCM 21823 / NBRC 15573 / CFN 42).